Here is a 512-residue protein sequence, read N- to C-terminus: MEELQEYFKKDRSPQQHFLYPLLLQEYIYTLAHDDSLNGSIFYEPIEFIGYDNKFSLVLVKRLIIRMYQQNFLIYLVNDSNQNRFGGHSNYFYSHFFYSQMVSKGFSVIVEIPFSLRLVSSSEEKEIPKSQNLGSIHSIFPFLEDKLSHLNNVSDILIPHPIHFEILVQILQCWIQDVPSLHLLRFFLHKYQNLNKTIQSNKTIYVFSKENKRLFWFLHNSYVSECEFLLVFFHKQSCYLRSTSSGAFLERSHFYGKMEHIIIVCCNNFQKTLWPVKDPLIHYVRYQGKAILASRGTHLLMKKWRYYFVNFWQYYFHFWSQPYRMHINSLLNYSFYFMGYLLGVLINPYAVKNQMLENSFLIDTVINKFDTIIPIIPLIGSLSKAKFCTFSGHPISKPIWADLLDFDIIDRFGRICRNLSHYHSGSSKKQSLYRIKYILRLSCARTLARKHKSTVRALLQRLGSGLLEEFFTEEEQVLSFFFPKTTLFTLHGSHRERIWSLDIIRINDLVNN.

The protein belongs to the intron maturase 2 family. MatK subfamily.

It localises to the plastid. Its subcellular location is the chloroplast. Its function is as follows. Usually encoded in the trnK tRNA gene intron. Probably assists in splicing its own and other chloroplast group II introns. The sequence is that of Maturase K from Lilium henryi (Henry's lily).